The following is a 1604-amino-acid chain: Metabotropic glutamate receptor-like protein R (1604 aa).

A signal peptide spans 1-27 (MVIKKPFIFIFICFLICLLICIDLTNC). The Extracellular segment spans residues 28-1149 (NTINNNNNNN…TDVSKTKIAK (1122 aa)). Over residues 38–69 (NNNNNNNNNNNNNNNNNNNNNNNNNNNNNNDN) the composition is skewed to low complexity. The interval 38 to 72 (NNNNNNNNNNNNNNNNNNNNNNNNNNNNNNDNNEN) is disordered. Positions 98-133 (DFYINKIKKEIKDREKYKNNIENEILKINSQKKRKK) form a coiled coil. The disordered stretch occupies residues 213-263 (NNNNNNNNNNNNNNNNNNKNNNNNNNNKNNNNNNNNKNNNNNNNNKNNNKN). 23 N-linked (GlcNAc...) asparagine glycosylation sites follow: asparagine 285, asparagine 327, asparagine 359, asparagine 375, asparagine 489, asparagine 498, asparagine 525, asparagine 577, asparagine 593, asparagine 624, asparagine 768, asparagine 837, asparagine 841, asparagine 851, asparagine 864, asparagine 876, asparagine 885, asparagine 888, asparagine 913, asparagine 967, asparagine 991, asparagine 1097, and asparagine 1109. Residues 1150–1170 (IIIGISAIIVSIGVLITAILT) form a helical membrane-spanning segment. The Cytoplasmic segment spans residues 1171-1184 (FIYRKRKIMRYSNP). Residues 1185–1205 (VFLLIILVGCVCGLVSTFVSF) form a helical membrane-spanning segment. At 1206–1211 (STTSAT) the chain is on the extracellular side. The chain crosses the membrane as a helical span at residues 1212–1232 (CSIRMVLIPLFFFIITSAIFI). The Cytoplasmic portion of the chain corresponds to 1233-1256 (KQYRVYCLIRGVEELHDMSIENSY). Residues 1257–1277 (LLKLQSFILIIPAILIAVSVI) form a helical membrane-spanning segment. At 1278-1304 (ATRMHRKYNFDLQKETIQAYCYSKNFY) the chain is on the extracellular side. Residues 1305–1325 (IIFICLALYEFSILLYGCWIV) traverse the membrane as a helical segment. Residues 1326 to 1340 (IKCRQYRSFPGSFNE) are Cytoplasmic-facing. The chain crosses the membrane as a helical span at residues 1341–1361 (FFYIGVLIYVLTVILVVSIPI). At 1362 to 1372 (GFALLNSALTD) the chain is on the extracellular side. The helical transmembrane segment at 1373 to 1393 (FLLYSIPILVLIVAIIGLLFA) threads the bilayer. Over 1394–1604 (PKFYFLFRTD…KSSQNSPLLD (211 aa)) the chain is Cytoplasmic. A disordered region spans residues 1457–1604 (TGSNTSDDVS…KSSQNSPLLD (148 aa)). 2 stretches are compositionally biased toward low complexity: residues 1471 to 1527 (FDSP…NKNN) and 1534 to 1556 (SSSNSSSTADFEISSSGESGRSS). Basic residues predominate over residues 1563-1572 (NNKKNRRKNS). The segment covering 1573 to 1584 (LRTPILNSLLSP) has biased composition (polar residues).

This sequence belongs to the G-protein coupled receptor 3 family. GABA-B receptor subfamily.

It localises to the membrane. This chain is Metabotropic glutamate receptor-like protein R (grlR), found in Dictyostelium discoideum (Social amoeba).